A 434-amino-acid chain; its full sequence is Glucose-6-phosphate 1-dehydrogenase (434 aa).

Residues 7 to 14 (GSSGDLAK), arginine 36, tyrosine 93, and lysine 112 contribute to the NADP(+) site. D-glucose 6-phosphate contacts are provided by residues lysine 112, 137 to 141 (HYLLK), glutamate 175, and aspartate 193. The Proton acceptor role is filled by histidine 198. Residues lysine 280 and lysine 285 each contribute to the D-glucose 6-phosphate site. Residue arginine 286 coordinates NADP(+).

The protein belongs to the glucose-6-phosphate dehydrogenase family.

The catalysed reaction is D-glucose 6-phosphate + NADP(+) = 6-phospho-D-glucono-1,5-lactone + NADPH + H(+). The protein operates within carbohydrate degradation; pentose phosphate pathway; D-ribulose 5-phosphate from D-glucose 6-phosphate (oxidative stage): step 1/3. In terms of biological role, catalyzes the rate-limiting step of the oxidative pentose-phosphate pathway, which represents a route for the dissimilation of carbohydrates besides glycolysis. The main function of this enzyme is to provide reducing power (NADPH) and pentose phosphates for fatty acid and nucleic acid synthesis. This chain is Glucose-6-phosphate 1-dehydrogenase (ZWF1), found in Encephalitozoon cuniculi (strain GB-M1) (Microsporidian parasite).